We begin with the raw amino-acid sequence, 625 residues long: Low affinity potassium transport system protein Kup (625 aa).

Transmembrane regions (helical) follow at residues 15-35, 58-78, 103-123, 140-160, 171-191, 218-238, 251-271, 282-302, 340-360, 366-386, 396-416, and 422-442; these read TIFS…IYII, IIFW…IVSI, FVIV…IIII, LSFE…LFFI, IFSF…LKGI, FFVF…YINI, LFFV…IILL, FLVP…ISII, IYIP…ISIF, LILI…FFSL, FKIL…FIFI, and IICG…IMIT.

The protein belongs to the HAK/KUP transporter (TC 2.A.72) family.

The protein localises to the cell membrane. It carries out the reaction K(+)(in) + H(+)(in) = K(+)(out) + H(+)(out). In terms of biological role, responsible for the low-affinity transport of potassium into the cell. Likely operates as a K(+):H(+) symporter. The polypeptide is Low affinity potassium transport system protein Kup (Wigglesworthia glossinidia brevipalpis).